We begin with the raw amino-acid sequence, 167 residues long: Protein-export protein SecB (167 aa).

The protein belongs to the SecB family. As to quaternary structure, homotetramer, a dimer of dimers. One homotetramer interacts with 1 SecA dimer.

The protein resides in the cytoplasm. Functionally, one of the proteins required for the normal export of preproteins out of the cell cytoplasm. It is a molecular chaperone that binds to a subset of precursor proteins, maintaining them in a translocation-competent state. It also specifically binds to its receptor SecA. The sequence is that of Protein-export protein SecB from Cellvibrio japonicus (strain Ueda107) (Pseudomonas fluorescens subsp. cellulosa).